Here is a 390-residue protein sequence, read N- to C-terminus: 8-amino-7-oxononanoate synthase (390 aa).

Arg19 provides a ligand contact to substrate. 106 to 107 (GY) is a pyridoxal 5'-phosphate binding site. A substrate-binding site is contributed by His131. The pyridoxal 5'-phosphate site is built by Ser176, His204, and Thr233. Lys236 is subject to N6-(pyridoxal phosphate)lysine. Thr350 is a binding site for substrate.

Belongs to the class-II pyridoxal-phosphate-dependent aminotransferase family. BioF subfamily. Homodimer. Pyridoxal 5'-phosphate serves as cofactor.

It catalyses the reaction 6-carboxyhexanoyl-[ACP] + L-alanine + H(+) = (8S)-8-amino-7-oxononanoate + holo-[ACP] + CO2. Its pathway is cofactor biosynthesis; biotin biosynthesis. Functionally, catalyzes the decarboxylative condensation of pimeloyl-[acyl-carrier protein] and L-alanine to produce 8-amino-7-oxononanoate (AON), [acyl-carrier protein], and carbon dioxide. The sequence is that of 8-amino-7-oxononanoate synthase from Pseudomonas entomophila (strain L48).